Reading from the N-terminus, the 302-residue chain is MSWIERILNKSTTTPSRKASIPEGVWTKCDSCGQVLYRAELERNLEVCPKCDHHMRMHGRARLHSVLDEGSLIELGSELEPKDVLKFRDSKKYKDRLSAAQKDTSETDALIVMKGTLHGMPVVAAAFEFSFMGGSMGSVVGARFVRAVEQALADNCPMMCFSASGGARMQEALMSLMQMAKTSAALAKMQERGLPYISVLTDPTMGGVSASFAMLGDLNIAEPKALIGFAGPRVIEQTVREKLPPGFQRSEFLIEKGAIDMIVRRPVMRFKLASVLAKMMNLPAPQEDIVTEAAVEPQNPEA.

The 270-residue stretch at 25–294 (VWTKCDSCGQ…PQEDIVTEAA (270 aa)) folds into the CoA carboxyltransferase N-terminal domain. 4 residues coordinate Zn(2+): C29, C32, C48, and C51. A C4-type zinc finger spans residues 29 to 51 (CDSCGQVLYRAELERNLEVCPKC).

This sequence belongs to the AccD/PCCB family. As to quaternary structure, acetyl-CoA carboxylase is a heterohexamer composed of biotin carboxyl carrier protein (AccB), biotin carboxylase (AccC) and two subunits each of ACCase subunit alpha (AccA) and ACCase subunit beta (AccD). It depends on Zn(2+) as a cofactor.

The protein resides in the cytoplasm. It carries out the reaction N(6)-carboxybiotinyl-L-lysyl-[protein] + acetyl-CoA = N(6)-biotinyl-L-lysyl-[protein] + malonyl-CoA. It functions in the pathway lipid metabolism; malonyl-CoA biosynthesis; malonyl-CoA from acetyl-CoA: step 1/1. In terms of biological role, component of the acetyl coenzyme A carboxylase (ACC) complex. Biotin carboxylase (BC) catalyzes the carboxylation of biotin on its carrier protein (BCCP) and then the CO(2) group is transferred by the transcarboxylase to acetyl-CoA to form malonyl-CoA. In Erwinia tasmaniensis (strain DSM 17950 / CFBP 7177 / CIP 109463 / NCPPB 4357 / Et1/99), this protein is Acetyl-coenzyme A carboxylase carboxyl transferase subunit beta.